Here is a 319-residue protein sequence, read N- to C-terminus: tRNA-cytidine(32) 2-sulfurtransferase (319 aa).

The PP-loop motif motif lies at 43-48 (SGGKDS). [4Fe-4S] cluster contacts are provided by C118, C121, and C209.

The protein belongs to the TtcA family. In terms of assembly, homodimer. Requires Mg(2+) as cofactor. [4Fe-4S] cluster is required as a cofactor.

Its subcellular location is the cytoplasm. It carries out the reaction cytidine(32) in tRNA + S-sulfanyl-L-cysteinyl-[cysteine desulfurase] + AH2 + ATP = 2-thiocytidine(32) in tRNA + L-cysteinyl-[cysteine desulfurase] + A + AMP + diphosphate + H(+). It participates in tRNA modification. Catalyzes the ATP-dependent 2-thiolation of cytidine in position 32 of tRNA, to form 2-thiocytidine (s(2)C32). The sulfur atoms are provided by the cysteine/cysteine desulfurase (IscS) system. The protein is tRNA-cytidine(32) 2-sulfurtransferase of Neisseria gonorrhoeae (strain NCCP11945).